The sequence spans 149 residues: Transcriptional regulator MraZ (149 aa).

2 SpoVT-AbrB domains span residues 7–54 (KYVN…GISH) and 83–126 (ALQL…QPQN).

It belongs to the MraZ family. Forms oligomers.

The protein resides in the cytoplasm. It localises to the nucleoid. This chain is Transcriptional regulator MraZ, found in Rickettsia canadensis (strain McKiel).